The primary structure comprises 84 residues: U8-theraphotoxin-Hhn1b (84 aa).

An N-terminal signal peptide occupies residues 1–21; that stretch reads MKVVLIVCLVWVMAMMELVSC. 4 cysteine pairs are disulfide-bonded: Cys-23/Cys-35, Cys-29/Cys-44, Cys-34/Cys-67, and Cys-54/Cys-75.

It belongs to the AVIT (prokineticin) family. As to expression, expressed by the venom gland.

It localises to the secreted. The polypeptide is U8-theraphotoxin-Hhn1b (Cyriopagopus hainanus (Chinese bird spider)).